Reading from the N-terminus, the 372-residue chain is L-lysine 4-hydroxylase (372 aa).

Residues histidine 176, glutamate 178, and histidine 312 each coordinate Fe cation.

It belongs to the clavaminate synthase family. Fe(2+) serves as cofactor.

It catalyses the reaction L-lysine + 2-oxoglutarate + O2 = (4R)-4-hydroxy-L-lysine + succinate + CO2. Its function is as follows. Alpha-ketoglutarate-dependent dioxygenase that in vitro catalyzes the regio- and stereoselective hydroxylation of L-lysine, leading to (4R)-4-hydroxy-L-lysine. This Flavobacterium sp. (strain CF136) protein is L-lysine 4-hydroxylase.